Reading from the N-terminus, the 82-residue chain is UPF0410 protein YeaQ (82 aa).

2 helical membrane passes run 26–46 and 57–77; these read GGGFFMTILLGIVGAVVGGWI and GFNFGSFVVAVIGAIVVLFIY.

Belongs to the UPF0410 family.

The protein resides in the cell inner membrane. This is UPF0410 protein YeaQ (yeaQ) from Escherichia coli O157:H7.